We begin with the raw amino-acid sequence, 203 residues long: Histone deacetylase HDT4 (203 aa).

Residues 2 to 5 (EFWG) are required to repress transcription. Residues 121 to 203 (AALPQNEINP…PFPCGPSCKK (83 aa)) are disordered. The segment covering 129-157 (NPEEDDESDSDEMGLDEDDDSSDEEDVEA) has biased composition (acidic residues). Positions 180 to 193 (GGKKNKSSGGKKRC) are enriched in basic residues.

The protein belongs to the histone deacetylase HD2 family. In terms of tissue distribution, confined to stems and flowers with young siliques.

It localises to the nucleus. Its subcellular location is the nucleolus. Functionally, probably mediates the deacetylation of lysine residues lysine residues on the N-terminal part of the core histones (H2A, H2B, H3 and H4). Histone deacetylation gives a tag for epigenetic repression and plays an important role in transcriptional regulation, cell cycle progression and developmental events. This Arabidopsis thaliana (Mouse-ear cress) protein is Histone deacetylase HDT4 (HDT4).